Reading from the N-terminus, the 233-residue chain is 2-C-methyl-D-erythritol 4-phosphate cytidylyltransferase (233 aa).

Belongs to the IspD/TarI cytidylyltransferase family. IspD subfamily.

It carries out the reaction 2-C-methyl-D-erythritol 4-phosphate + CTP + H(+) = 4-CDP-2-C-methyl-D-erythritol + diphosphate. The protein operates within isoprenoid biosynthesis; isopentenyl diphosphate biosynthesis via DXP pathway; isopentenyl diphosphate from 1-deoxy-D-xylulose 5-phosphate: step 2/6. Functionally, catalyzes the formation of 4-diphosphocytidyl-2-C-methyl-D-erythritol from CTP and 2-C-methyl-D-erythritol 4-phosphate (MEP). The chain is 2-C-methyl-D-erythritol 4-phosphate cytidylyltransferase from Thiobacillus denitrificans (strain ATCC 25259 / T1).